The primary structure comprises 748 residues: Probable transcriptional regulator SLK1 (748 aa).

2 disordered regions span residues 67–93 (QHLP…RENN) and 138–163 (QQRL…QQQQ). A compositionally biased stretch (low complexity) spans 71–81 (QQQQQQLLQQQ). The dimerization stretch occupies residues 204–451 (PAENCITYWR…EQKIGPIEGL (248 aa)). Positions 213–227 (RKFVAEYFSPRAKQR) match the Nuclear localization signal motif. The span at 572 to 587 (NAMNNPNSNTGKQEGF) shows a compositional bias: polar residues. Disordered stretches follow at residues 572 to 653 (NAMN…GNTP) and 667 to 712 (ENGG…NNSF). Over residues 588–606 (SSQNPTPNSNQSPSSSSQQ) the composition is skewed to low complexity. Positions 615-653 (FPNSPQMQQQQRTMNGPTNILPQNHPHQLQSPHSHGNTP) are enriched in polar residues. A compositionally biased stretch (low complexity) spans 667–686 (ENGGSVQQQQAFSGQSGSNS). Residues 687–699 (NAERNTTASTSNI) show a composition bias toward polar residues.

It belongs to the adn1/SEU family. As to quaternary structure, forms corepressor complexes with LUH; LUH is the transcription repressor subunit and SLK1 the specific DNA-binding adapters. As to expression, expressed in young flower meristems, ovules and the carpel margin meristem.

The protein localises to the nucleus. Functionally, probable transcription regulator that functions in the development of the carpel margin meristem similarly to SEUSS (SEU). In association with SEU, supports organ development from meristematic regions by facilitating auxin response and thus organ initiation, and by sustaining meristematic potential through the maintenance of PHABULOSA expression. DNA-binding adapter subunit of the SEU-SLK1 transcriptional corepressor of abiotic stress (e.g. salt and osmotic stress) response genes. In Arabidopsis thaliana (Mouse-ear cress), this protein is Probable transcriptional regulator SLK1 (SLK1).